Here is a 128-residue protein sequence, read N- to C-terminus: 14.7 kDa protein (128 aa).

A C4-type zinc finger spans residues 65–94 (CFDCGAYLYDDHVCKRFTSRSNSDCLSVIH).

May act as a regulatory factor during viral transcription. This Shallot virus X (ShVX) protein is 14.7 kDa protein.